The chain runs to 160 residues: SsrA-binding protein (160 aa).

This sequence belongs to the SmpB family.

Its subcellular location is the cytoplasm. In terms of biological role, required for rescue of stalled ribosomes mediated by trans-translation. Binds to transfer-messenger RNA (tmRNA), required for stable association of tmRNA with ribosomes. tmRNA and SmpB together mimic tRNA shape, replacing the anticodon stem-loop with SmpB. tmRNA is encoded by the ssrA gene; the 2 termini fold to resemble tRNA(Ala) and it encodes a 'tag peptide', a short internal open reading frame. During trans-translation Ala-aminoacylated tmRNA acts like a tRNA, entering the A-site of stalled ribosomes, displacing the stalled mRNA. The ribosome then switches to translate the ORF on the tmRNA; the nascent peptide is terminated with the 'tag peptide' encoded by the tmRNA and targeted for degradation. The ribosome is freed to recommence translation, which seems to be the essential function of trans-translation. The protein is SsrA-binding protein of Mycobacterium leprae (strain Br4923).